The following is a 240-amino-acid chain: Phosducin-like protein 2 (240 aa).

The 164-residue stretch at 38–201 (QQEAMVKPYE…LEWKLSEVGA (164 aa)) folds into the Phosducin domain. The tract at residues 89–240 (FGELREISGN…DSSGSDTEAK (152 aa)) is thioredoxin fold.

The protein belongs to the phosducin family. In terms of assembly, interacts with the CCT chaperonin complex and actin. Testis-specific (at protein level).

It localises to the endoplasmic reticulum. In terms of biological role, essential for male fertility, spermiogenesis and acrosome formation. In Mus musculus (Mouse), this protein is Phosducin-like protein 2 (Pdcl2).